The primary structure comprises 1186 residues: Syntaxin-binding protein 5-like (1186 aa).

At methionine 1 the chain carries N-acetylmethionine. The disordered stretch occupies residues 15 to 40; it reads ASSPGSGSSSGSNSGGGAGSGSVHPA. Low complexity predominate over residues 16 to 26; sequence SSPGSGSSSGS. WD repeat units follow at residues 74–107, 114–153, 158–194, 213–247, 253–285, 307–349, 357–391, 413–490, 518–629, and 643–705; these read TALA…CYCQ, VLQL…SLKF, ITYC…GYVI, HLSD…ELRV, IHSI…PSRP, PILK…KAIT, IVEF…VVDL, TCTA…YKLK, QMIY…ELVI, and TSLA…IADN. Threonine 568 is modified (phosphothreonine). Phosphoserine is present on residues serine 574, serine 589, and serine 593. At threonine 596 the chain carries Phosphothreonine. Serine 599 carries the post-translational modification Phosphoserine. Position 709 is an omega-N-methylarginine (arginine 709). Residues 748–769 are compositionally biased toward polar residues; it reads TSDHVNGHCTSPTSQSCSSGKR. Positions 748-771 are disordered; it reads TSDHVNGHCTSPTSQSCSSGKRLS. Serine 763, serine 765, serine 766, serine 771, serine 772, serine 793, serine 800, serine 812, serine 820, serine 822, and serine 823 each carry phosphoserine. WD repeat units lie at residues 832–889, 898–969, 974–1018, and 1032–1055; these read ITAL…SGTF, TFSC…QTCL, ITET…LDVN, and CFTN…TYSQ. Threonine 1093 bears the Phosphothreonine mark. Positions 1121-1181 constitute a v-SNARE coiled-coil homology domain; that stretch reads SIEGMKGAAG…HELMLKYKDK (61 aa).

The protein belongs to the WD repeat L(2)GL family. Interacts with STX1A and STX4. Post-translationally, phosphorylated, leading to STXBP5L increased turnover and subsequent de-repression of insulin secretion. Phosphorylated on serine residues in response to glucose or phorbol esters. Ubiquitinated by the E3 ligase SYVN1, leading to STXBP5L proteasomal degradation. Detected in kidney, hippocampus and lung carcinoma.

Its subcellular location is the cytoplasm. It is found in the cell membrane. The protein resides in the membrane. Its function is as follows. Plays a role in vesicle trafficking and exocytosis inhibition. In pancreatic beta-cells, inhibits insulin secretion probably by interacting with and regulating STX1A and STX4, key t-SNARE proteins involved in the fusion of insulin granules to the plasma membrane. Also plays a role in neurotransmitter release by inhibiting basal acetylcholine release from axon terminals and by preventing synaptic fatigue upon repetitive stimulation. Promotes as well axonal outgrowth. The protein is Syntaxin-binding protein 5-like (STXBP5L) of Homo sapiens (Human).